The following is a 468-amino-acid chain: Lipase 1 (468 aa).

The signal sequence occupies residues Met-1 to Ala-16. Asn-79 carries an N-linked (GlcNAc...) asparagine glycan. A disulfide bridge links Cys-112 with Cys-285. The active-site Charge relay system is the Ser-196. N-linked (GlcNAc...) asparagine glycans are attached at residues Asn-231 and Asn-319. Catalysis depends on charge relay system residues Asp-348 and His-381. Cys-364 and Cys-409 are oxidised to a cystine. N-linked (GlcNAc...) asparagine glycans are attached at residues Asn-417, Asn-422, and Asn-451.

Belongs to the AB hydrolase superfamily. Lipase family. Class Lip subfamily.

The protein localises to the secreted. It carries out the reaction a triacylglycerol + H2O = a diacylglycerol + a fatty acid + H(+). Functionally, secreted lipase that is able to hydrolyze both the neutral triacylglycerols and the monopalmitate ester Tween 40, allowing the use of hydrolyzed products as carbon sources. Has broad lipolytic activity, which may be important for colonization and subsequent infection, therefore contributing to the persistence and virulence in human tissue. This is Lipase 1 from Candida albicans (strain SC5314 / ATCC MYA-2876) (Yeast).